The sequence spans 340 residues: Thylakoidal processing peptidase 1, chloroplastic (340 aa).

A chloroplast-targeting transit peptide spans 1–52 (MAIRITFTYSTHVARNLVGTRVGPGGYCFESLVRPRFFSHKRDFDRSPRNRP). The chain crosses the membrane as a helical span at residues 155-175 (EDAKAAFTAVTVSILFRSALA). The Lumenal, thylakoid segment spans residues 176–340 (EPKSIPSTSM…AITRGPVAVS (165 aa)). The active site involves serine 184.

This sequence belongs to the peptidase S26 family.

The protein resides in the plastid. The protein localises to the chloroplast thylakoid membrane. It catalyses the reaction Cleavage of hydrophobic, N-terminal signal or leader sequences from secreted and periplasmic proteins.. In terms of biological role, cleaves the thylakoid-transfer domain from a chloroplast protein. This chain is Thylakoidal processing peptidase 1, chloroplastic (TPP1), found in Arabidopsis thaliana (Mouse-ear cress).